The primary structure comprises 253 residues: MEMKQISETTLKITISMDDLEERGMELKDFLIPQEKTEEFFYSVMDELDLPDNFKDSGMLSFRVTPRKDRLDVFVTKSEINKDINLEDLAEFGDMSQMTPEDFFKSLEQSMREKGDVKAHEKLEKIEEIMEDVVEATLANQSEAADPSTNHESEPLDYVHYVLDFSTITEAVAFAKTIDFSIEASELYKGSNCYHMTILLDVQQQPSYFANVMYARLIEHANPGSKTRAYLQEHGLQLMLDGAVEQLQKIELG.

The protein belongs to the MecA family. In terms of assembly, homodimer.

Functionally, enables the recognition and targeting of unfolded and aggregated proteins to the ClpC protease or to other proteins involved in proteolysis. In Streptococcus pyogenes serotype M18 (strain MGAS8232), this protein is Adapter protein MecA.